A 218-amino-acid polypeptide reads, in one-letter code: Uracil-DNA glycosylase (218 aa).

The active-site Proton acceptor is the aspartate 59.

It belongs to the uracil-DNA glycosylase (UDG) superfamily. UNG family.

The protein localises to the cytoplasm. The catalysed reaction is Hydrolyzes single-stranded DNA or mismatched double-stranded DNA and polynucleotides, releasing free uracil.. Functionally, excises uracil residues from the DNA which can arise as a result of misincorporation of dUMP residues by DNA polymerase or due to deamination of cytosine. This is Uracil-DNA glycosylase from Staphylococcus aureus (strain MSSA476).